The sequence spans 327 residues: Type II methyltransferase M.HhaI (327 aa).

The region spanning 12–325 (LRFIDLFAGL…YNIGSSLNFK (314 aa)) is the SAM-dependent MTase C5-type domain. Cysteine 81 is a catalytic residue.

This sequence belongs to the class I-like SAM-binding methyltransferase superfamily. C5-methyltransferase family. In terms of assembly, monomer.

It carries out the reaction a 2'-deoxycytidine in DNA + S-adenosyl-L-methionine = a 5-methyl-2'-deoxycytidine in DNA + S-adenosyl-L-homocysteine + H(+). Functionally, a methylase, recognizes the double-stranded sequence 5'-GCGC-3', methylates C-2 on both strands, and protects the DNA from cleavage by the HhaI endonuclease. The polypeptide is Type II methyltransferase M.HhaI (hhaIM) (Haemophilus parahaemolyticus).